Here is a 79-residue protein sequence, read N- to C-terminus: Hemoglobin subunit zeta (79 aa).

An N-acetylserine modification is found at Ser1. Residues 1-79 (SLTKTXXTII…FKLLSHXFLV (79 aa)) enclose the Globin domain. Residues Ser38 and Ser53 each carry the phosphoserine modification. His59 lines the heme b pocket.

It belongs to the globin family. In terms of assembly, heterotetramer of two zeta chains and two epsilon chains.

Its function is as follows. The zeta chain is an alpha-type chain of mammalian embryonic hemoglobin. The chain is Hemoglobin subunit zeta from Notamacropus eugenii (Tammar wallaby).